The sequence spans 157 residues: Heat shock 22 kDa protein, chloroplastic (157 aa).

The region spanning Gly-40–Thr-155 is the sHSP domain.

Belongs to the small heat shock protein (HSP20) family.

It localises to the plastid. It is found in the chloroplast. This is Heat shock 22 kDa protein, chloroplastic from Chlamydomonas reinhardtii (Chlamydomonas smithii).